The sequence spans 92 residues: MKTLLLTLVVVTIVCLDLGYTRRCFTTPSVRSERCPPGQEVCYTKTWTDGHGGSRGKRVDLGCAATCPTPKKKDIKTICCSKDNCNTFPKWP.

A signal peptide spans 1–21 (MKTLLLTLVVVTIVCLDLGYT). 4 disulfide bridges follow: C24–C42, C35–C63, C67–C79, and C80–C85.

It belongs to the three-finger toxin family. Long-chain subfamily. Type II alpha-neurotoxin sub-subfamily. Expressed by the venom gland.

Its subcellular location is the secreted. In terms of biological role, binds with high affinity to muscular (alpha-1/CHRNA1) and neuronal (alpha-7/CHRNA7) nicotinic acetylcholine receptor (nAChR) and inhibits acetylcholine from binding to the receptor, thereby impairing neuromuscular and neuronal transmission. The protein is Long neurotoxin 3FTx-Oxy2 of Oxyuranus microlepidotus (Inland taipan).